The primary structure comprises 524 residues: uncharacterized protein (524 aa).

An N-terminal signal peptide occupies residues 1 to 26; the sequence is MLKIDMWFKLKSLGFSLISLQALLAS. A lipid anchor (N-palmitoyl cysteine) is attached at C27. C27 is lipidated: S-diacylglycerol cysteine. The segment at 37-68 is disordered; it reads IEEKNDSTTDNNATPFKDEQSDQGTEVNQQPK. Positions 58–68 are enriched in polar residues; it reads DQGTEVNQQPK.

Belongs to the MG067/MG068/MG395 family.

It is found in the cell membrane. This is an uncharacterized protein from Mycoplasma genitalium (strain ATCC 33530 / DSM 19775 / NCTC 10195 / G37) (Mycoplasmoides genitalium).